A 257-amino-acid chain; its full sequence is Imidazole glycerol phosphate synthase subunit HisF (257 aa).

Residues Asp12 and Asp131 contribute to the active site.

This sequence belongs to the HisA/HisF family. In terms of assembly, heterodimer of HisH and HisF.

The protein localises to the cytoplasm. It catalyses the reaction 5-[(5-phospho-1-deoxy-D-ribulos-1-ylimino)methylamino]-1-(5-phospho-beta-D-ribosyl)imidazole-4-carboxamide + L-glutamine = D-erythro-1-(imidazol-4-yl)glycerol 3-phosphate + 5-amino-1-(5-phospho-beta-D-ribosyl)imidazole-4-carboxamide + L-glutamate + H(+). Its pathway is amino-acid biosynthesis; L-histidine biosynthesis; L-histidine from 5-phospho-alpha-D-ribose 1-diphosphate: step 5/9. In terms of biological role, IGPS catalyzes the conversion of PRFAR and glutamine to IGP, AICAR and glutamate. The HisF subunit catalyzes the cyclization activity that produces IGP and AICAR from PRFAR using the ammonia provided by the HisH subunit. The sequence is that of Imidazole glycerol phosphate synthase subunit HisF from Burkholderia mallei (strain NCTC 10247).